The chain runs to 644 residues: uncharacterized protein (644 aa).

A disordered region spans residues 1 to 35; that stretch reads MKANGLDNDPARTGMERTDIDSEHPEAQPLLNNNH. The Cytoplasmic segment spans residues 1–90; sequence MKANGLDNDP…ILNILILINT (90 aa). The span at 14–26 shows a compositional bias: basic and acidic residues; that stretch reads GMERTDIDSEHPE. S22, S56, and S63 each carry phosphoserine. Residues 91-111 form a helical membrane-spanning segment; the sequence is IWLVTTLISDFFFNINILFGF. The Vacuolar portion of the chain corresponds to 112–122; it reads SNRYASFNDLT. A helical membrane pass occupies residues 123–143; that stretch reads LIFISIIANSFNLWFNKLGLY. Residues 144-147 are Cytoplasmic-facing; that stretch reads SALD. The helical transmembrane segment at 148–168 threads the bilayer; it reads YSLNVTLCVLTLFNLALTYLI. The Vacuolar portion of the chain corresponds to 169–174; that stretch reads KYTRQR. A helical membrane pass occupies residues 175–195; it reads IGFVGTFTYLWTSFSFFIGAI. Residues 196 to 271 lie on the Cytoplasmic side of the membrane; sequence LDWYLLFYNN…EWVSIGFRNT (76 aa). The tract at residues 225–251 is disordered; that stretch reads NENHTNSTENRDRSQYGSGSPTPTHRS. The segment covering 239 to 251 has biased composition (polar residues); sequence QYGSGSPTPTHRS. S244 carries the phosphoserine modification. The helical transmembrane segment at 272–292 threads the bilayer; sequence IKFLILIFFALFTLNTLLTTL. At 293-644 the chain is on the vacuolar side; the sequence is DTYRLTHKLP…IGELGKLTED (352 aa). The region spanning 348–619 is the AB hydrolase-1 domain; sequence PIILFEHGGY…IVEGGHEIYK (272 aa). A disordered region spans residues 469–492; the sequence is GRGDGDDGDDGNGNDGDGRNHDKT.

The protein localises to the vacuole membrane. This is an uncharacterized protein from Saccharomyces cerevisiae (strain ATCC 204508 / S288c) (Baker's yeast).